We begin with the raw amino-acid sequence, 250 residues long: MMKILISNDDGVNAIGIVALTRSLSQIAETLTVGPDRNCSGASNSLTLTNPLRLNTLDNGFISVSGTPTDCVHLAIRELYQDEPDMVVSGINAGANMGDDTLYSGTVAAAMEGRFLGFPAIAISLVGHEHYETAAHYALKIVKALQDNPVAQDKILNINVPDLPLSEVKGMKITRLGARHRAEGMVRTQDPAGKEIFWLGPPGDEQDASDGTDFHAVANGYVSITPLTVDLTAFEQLKALDNWLANISEK.

Residues Asp-9, Asp-10, Ser-40, and Asn-92 each coordinate a divalent metal cation.

It belongs to the SurE nucleotidase family. Requires a divalent metal cation as cofactor.

It localises to the cytoplasm. It catalyses the reaction a ribonucleoside 5'-phosphate + H2O = a ribonucleoside + phosphate. Functionally, nucleotidase that shows phosphatase activity on nucleoside 5'-monophosphates. This is 5'-nucleotidase SurE from Shewanella pealeana (strain ATCC 700345 / ANG-SQ1).